We begin with the raw amino-acid sequence, 216 residues long: Sperm microtubule inner protein 8 (216 aa).

As to quaternary structure, microtubule inner protein component of sperm flagellar doublet microtubules.

The protein resides in the cytoplasm. Its subcellular location is the cytoskeleton. It localises to the flagellum axoneme. In terms of biological role, microtubule inner protein (MIP) part of the dynein-decorated doublet microtubules (DMTs) in flagellum axoneme. May serve to reinforce and thus stabilize the microtubule structure in the sperm flagella. The sequence is that of Sperm microtubule inner protein 8 (Spmip8) from Rattus norvegicus (Rat).